The following is a 662-amino-acid chain: Polyunsaturated fatty acid lipoxygenase ALOX15 (662 aa).

Residues 2-114 (GLYRIRVSTG…VLSLPEGTGR (113 aa)) enclose the PLAT domain. One can recognise a Lipoxygenase domain in the interval 115 to 662 (TVGEDPQGLF…PSVVENSVAI (548 aa)). The Fe cation site is built by His360, His365, His540, His544, and Ile662.

This sequence belongs to the lipoxygenase family. In terms of assembly, interacts with PEBP1; in response to IL13/interleukin-13, prevents the interaction of PEBP1 with RAF1 to activate the ERK signaling cascade. It depends on Fe cation as a cofactor. In terms of tissue distribution, detected in monocytes and eosinophils (at protein level). Expressed in airway epithelial cells.

It is found in the cytoplasm. Its subcellular location is the cytosol. The protein localises to the cell membrane. It localises to the lipid droplet. The catalysed reaction is (5Z,8Z,11Z,14Z)-eicosatetraenoate + O2 = (12S)-hydroperoxy-(5Z,8Z,10E,14Z)-eicosatetraenoate. The enzyme catalyses (5Z,8Z,11Z,14Z)-eicosatetraenoate + O2 = (15S)-hydroperoxy-(5Z,8Z,11Z,13E)-eicosatetraenoate. It catalyses the reaction (9Z,12Z)-octadecadienoate + O2 = (13S)-hydroperoxy-(9Z,11E)-octadecadienoate. It carries out the reaction (5Z,8Z,11Z,14Z)-eicosatetraenoate + 2 O2 = (14R,15S)-dihydroperoxy-(5Z,8Z,10E,12E)-eicosatetraenoate. The catalysed reaction is (5Z,8Z,11Z,14Z)-eicosatetraenoate + 2 O2 = (8S,15S)-dihydroperoxy-(5Z,9E,11Z,13E)-eicosatetraenoate. The enzyme catalyses (14S,15R)-epoxy-(5Z,8Z,11Z)-eicosatrienoate + O2 = (8S)-hydroperoxy-(14S,15R)-epoxy-(5Z,9E,11Z)-eicosatrienoate. It catalyses the reaction (14S,15R)-epoxy-(5Z,8Z,11Z)-eicosatrienoate + O2 = (12S)-hydroperoxy-(14S,15R)-epoxy-(5Z,8Z,10E)-eicosatrienoate. It carries out the reaction (14R,15S)-epoxy-(5Z,8Z,11Z)-eicosatrienoate + O2 = (5S)-hydroperoxy-(14R,15S)-epoxy-(6E,8Z,11Z)-eicosatrienoate. The catalysed reaction is (14R,15S)-epoxy-(5Z,8Z,11Z)-eicosatrienoate + O2 = (12S)-hydroperoxy-(14R,15S)-epoxy-(5Z,8Z,10E)-eicosatrienoate. The enzyme catalyses (15R)-hydroperoxy-(5Z,8Z,11Z,13E)-eicosatetraenoate = 15-oxo-(5Z,8Z,11Z,13E)-eicosatetraenoate + H2O. It catalyses the reaction (15S)-hydroperoxy-(5Z,8Z,11Z,13E)-eicosatetraenoate = (14S,15S)-epoxy-(5Z,8Z,10E,12E)-eicosatetraenoate + H2O. It carries out the reaction (12S)-hydroperoxy-(5Z,8Z,10E,14Z)-eicosatetraenoate = (8S)-hydroxy-(11S,12S)-epoxy-(5Z,9E,14Z)-eicosatrienoate. The catalysed reaction is (4Z,7Z,10Z,13Z,16Z,19Z)-docosahexaenoate + O2 = (14S)-hydroperoxy-(4Z,7Z,10Z,12E,16Z,19Z)-docosahexaenoate. The enzyme catalyses (4Z,7Z,10Z,13Z,16Z,19Z)-docosahexaenoate + O2 = (17S)-hydroperoxy-(4Z,7Z,10Z,13Z,15E,19Z)-docosahexaenoate. It catalyses the reaction (7S)-hydroperoxy-(4Z,8E,10Z,13Z,16Z,19Z)-docosahexaenoate + O2 = (7S,14S)-dihydroperoxy-(4Z,8E,10Z,12E,16Z,19Z)-docosahexaenoate. It carries out the reaction (7S)-hydroperoxy-(4Z,8E,10Z,13Z,16Z,19Z)-docosahexaenoate + O2 = (7S,17S)-dihydroperoxy-(4Z,8E,10Z,13Z,15E,19Z)-docosahexaenoate. The catalysed reaction is (4Z,7Z,10Z,13Z,16Z,19Z)-docosahexaenoate + O2 = (11S)-hydroperoxy-(4Z,7Z,9E,13Z,16Z,19Z)-docosahexaenoate. The enzyme catalyses (7Z,10Z,13Z,16Z,19Z)-docosapentaenoate + O2 = 14-hydroperoxy-(7Z,10Z,12E,16Z,19Z)-docosapentaenoate. It catalyses the reaction (4Z,7Z,10Z,13Z,16Z)-docosapentaenoate + O2 = 14-hydroperoxy-(4Z,7Z,10Z,12E,16Z)-docosapentaenoate. It carries out the reaction N-(5Z,8Z,11Z,14Z)-eicosatetraenoyl-taurine + O2 = N-(12S)-hydroperoxy-(5Z,8Z,10E,14Z)-eicosatetraenoyl-taurine. The catalysed reaction is N-(5Z,8Z,11Z,14Z)-eicosatetraenoyl-gamma-aminobutanoate + O2 = N-(12S)-hydroperoxy-(5Z,8Z,10E,14Z)-eicosatetraenoyl-gamma-aminobutanoate. The enzyme catalyses N-(5Z,8Z,11Z,14Z)-eicosatetraenoyl-glycine + O2 = N-(12S)-hydroperoxy-(5Z,8Z,10E,14Z)-eicosatetraenoyl-glycine. It catalyses the reaction N-(5Z,8Z,11Z,14Z)-eicosatetraenoyl-L-alanine + O2 = N-(12S)-hydroperoxy-(5Z,8Z,10E,14Z)-eicosatetraenoyl-alanine. It carries out the reaction N-(5Z,8Z,11Z,14Z)-eicosatetraenoyl-taurine + O2 = N-(15S)-hydroperoxy-(5Z,8Z,11Z,13E)-eicosatetraenoyl-taurine. The catalysed reaction is N-(5Z,8Z,11Z,14Z)-eicosatetraenoyl-gamma-aminobutanoate + O2 = N-(15S)-hydroperoxy-(5Z,8Z,11Z,13E)-eicosatetraenoyl-gamma-aminobutanoate. The enzyme catalyses N-(5Z,8Z,11Z,14Z)-eicosatetraenoyl-glycine + O2 = N-(15S)-hydroperoxy-(5Z,8Z,11Z,13E)-eicosatetraenoyl-glycine. It catalyses the reaction N-(5Z,8Z,11Z,14Z)-eicosatetraenoyl-L-alanine + O2 = N-(15S)-hydroperoxy-(5Z,8Z,11Z,13E)-eicosatetraenoyl-alanine. The protein operates within lipid metabolism; hydroperoxy eicosatetraenoic acid biosynthesis. Activity is increased by binding phosphatidylinositol phosphates, especially phosphatidylinositol 3,4-bisphosphate and phosphatidylinositol 4,5-bisphosphate. Inactivated at 37 degrees Celsius by (13S)-hydroperoxy-(9Z,11E)-octadecadienoate. Its function is as follows. Non-heme iron-containing dioxygenase that catalyzes the stereo-specific peroxidation of free and esterified polyunsaturated fatty acids generating a spectrum of bioactive lipid mediators. It inserts peroxyl groups at C12 or C15 of arachidonate ((5Z,8Z,11Z,14Z)-eicosatetraenoate) producing both 12-hydroperoxyeicosatetraenoate/12-HPETE and 15-hydroperoxyeicosatetraenoate/15-HPETE. It may then act on 12-HPETE to produce hepoxilins, which may show pro-inflammatory properties. Can also peroxidize linoleate ((9Z,12Z)-octadecadienoate) to 13-hydroperoxyoctadecadienoate/13-HPODE. May participate in the sequential oxidations of DHA ((4Z,7Z,10Z,13Z,16Z,19Z)-docosahexaenoate) to generate specialized pro-resolving mediators (SPMs)like resolvin D5 ((7S,17S)-diHPDHA) and (7S,14S)-diHPDHA, that actively down-regulate the immune response and have anti-aggregation properties with platelets. Can convert epoxy fatty acids to hydroperoxy-epoxides derivatives followed by an intramolecular nucleophilic substitution leading to the formation of monocyclic endoperoxides. Plays an important role during the maintenance of self-tolerance by peroxidizing membrane-bound phosphatidylethanolamine which can then signal the sorting process for clearance of apoptotic cells during inflammation and prevent an autoimmune response. In addition to its role in the immune and inflammatory responses, this enzyme may play a role in epithelial wound healing in the cornea through production of lipoxin A4 (LXA(4)) and docosahexaenoic acid-derived neuroprotectin D1 (NPD1; 10R,17S-HDHA), both lipid autacoids exhibit anti-inflammatory and neuroprotective properties. Furthermore, it may regulate actin polymerization which is crucial for several biological processes such as the phagocytosis of apoptotic cells. It is also implicated in the generation of endogenous ligands for peroxisome proliferator activated receptor (PPAR-gamma), hence modulating macrophage development and function. It may also exert a negative effect on skeletal development by regulating bone mass through this pathway. As well as participates in ER stress and downstream inflammation in adipocytes, pancreatic islets, and liver. Finally, it is also involved in the cellular response to IL13/interleukin-13. The polypeptide is Polyunsaturated fatty acid lipoxygenase ALOX15 (Homo sapiens (Human)).